We begin with the raw amino-acid sequence, 607 residues long: CUB and zona pellucida-like domain-containing protein 1 (607 aa).

Positions 1-19 (MEVTGRLFIWAILAVSCGA) are cleaved as a signal peptide. C17 and C58 are disulfide-bonded. 2 consecutive CUB domains span residues 20–146 (QLNS…YFFS) and 154–265 (CGGD…YTSI). The Lumenal portion of the chain corresponds to 20–568 (QLNSTEAEGK…AEISNQPLSR (549 aa)). Residues N22, N57, and N67 are each glycosylated (N-linked (GlcNAc...) asparagine). Cystine bridges form between C85–C107, C154–C180, and C207–C229. Positions 276–519 (SCVSDKMRVI…SRCNQGCVPR (244 aa)) constitute a ZP domain. N419 carries an N-linked (GlcNAc...) asparagine glycan. Residues C442 and C498 are joined by a disulfide bond. The chain crosses the membrane as a helical span at residues 569 to 589 (LYLFSFMVLALNVVIVAITTV). The Cytoplasmic portion of the chain corresponds to 590-607 (KHFLNRWMDHRYQKLQVY).

Highly expressed in pancreatic acinar cells. Also expressed in epithelium of the uterus during late pregnancy but not detected in non-pregnant uterus or in a variety of other adult and fetal tissues.

It is found in the zymogen granule membrane. Functionally, localized to zymogen granules, where it functions in trypsinogen activation. May indirectly regulate cell motility, cell-cell and cell/extracellular matrix interactions. The protein is CUB and zona pellucida-like domain-containing protein 1 of Mus musculus (Mouse).